The following is a 67-amino-acid chain: Conotoxin Lt5.9 (67 aa).

Positions 1-19 (MLCLPVFIILLLLASPAAP) are cleaved as a signal peptide. Residues 20–46 (KSFETKVQSDLTRTDGNMETEENLGEV) constitute a propeptide that is removed on maturation.

It belongs to the conotoxin T superfamily. In terms of processing, contains 2 disulfide bonds that can be either 'C1-C3, C2-C4' or 'C1-C4, C2-C3', since these disulfide connectivities have been observed for conotoxins with cysteine framework V (for examples, see AC P0DQQ7 and AC P81755). Expressed by the venom duct.

It localises to the secreted. This Conus litteratus (Lettered cone) protein is Conotoxin Lt5.9.